A 315-amino-acid chain; its full sequence is Ribosomal RNA small subunit methyltransferase H (315 aa).

S-adenosyl-L-methionine contacts are provided by residues 35–37, aspartate 55, phenylalanine 84, aspartate 105, and glutamine 112; that span reads AGH.

It belongs to the methyltransferase superfamily. RsmH family.

Its subcellular location is the cytoplasm. The catalysed reaction is cytidine(1402) in 16S rRNA + S-adenosyl-L-methionine = N(4)-methylcytidine(1402) in 16S rRNA + S-adenosyl-L-homocysteine + H(+). In terms of biological role, specifically methylates the N4 position of cytidine in position 1402 (C1402) of 16S rRNA. The sequence is that of Ribosomal RNA small subunit methyltransferase H from Streptococcus agalactiae serotype III (strain NEM316).